Reading from the N-terminus, the 588-residue chain is Adenine deaminase (588 aa).

The protein belongs to the metallo-dependent hydrolases superfamily. Adenine deaminase family. As to quaternary structure, homodimer. Mn(2+) is required as a cofactor.

The enzyme catalyses adenine + H2O + H(+) = hypoxanthine + NH4(+). In Escherichia coli (strain SE11), this protein is Adenine deaminase.